The chain runs to 179 residues: Large ribosomal subunit protein uL5 (179 aa).

Belongs to the universal ribosomal protein uL5 family. In terms of assembly, part of the 50S ribosomal subunit; part of the 5S rRNA/L5/L18/L25 subcomplex. Contacts the 5S rRNA and the P site tRNA. Forms a bridge to the 30S subunit in the 70S ribosome.

In terms of biological role, this is one of the proteins that bind and probably mediate the attachment of the 5S RNA into the large ribosomal subunit, where it forms part of the central protuberance. In the 70S ribosome it contacts protein S13 of the 30S subunit (bridge B1b), connecting the 2 subunits; this bridge is implicated in subunit movement. Contacts the P site tRNA; the 5S rRNA and some of its associated proteins might help stabilize positioning of ribosome-bound tRNAs. The chain is Large ribosomal subunit protein uL5 from Desulforapulum autotrophicum (strain ATCC 43914 / DSM 3382 / VKM B-1955 / HRM2) (Desulfobacterium autotrophicum).